The chain runs to 291 residues: ATP synthase gamma chain (291 aa).

The protein belongs to the ATPase gamma chain family. As to quaternary structure, F-type ATPases have 2 components, CF(1) - the catalytic core - and CF(0) - the membrane proton channel. CF(1) has five subunits: alpha(3), beta(3), gamma(1), delta(1), epsilon(1). CF(0) has three main subunits: a, b and c.

It localises to the cell inner membrane. Its function is as follows. Produces ATP from ADP in the presence of a proton gradient across the membrane. The gamma chain is believed to be important in regulating ATPase activity and the flow of protons through the CF(0) complex. The sequence is that of ATP synthase gamma chain from Methylibium petroleiphilum (strain ATCC BAA-1232 / LMG 22953 / PM1).